A 186-amino-acid polypeptide reads, in one-letter code: TATA-box-binding protein E (186 aa).

Repeat copies occupy residues 10–86 (IENV…FDKL) and 101–179 (VQNI…TSRL).

This sequence belongs to the TBP family.

Its function is as follows. General factor that plays a role in the activation of archaeal genes transcribed by RNA polymerase. Binds specifically to the TATA box promoter element which lies close to the position of transcription initiation. This is TATA-box-binding protein E (tbpE) from Halobacterium salinarum (strain ATCC 700922 / JCM 11081 / NRC-1) (Halobacterium halobium).